We begin with the raw amino-acid sequence, 190 residues long: Large ribosomal subunit protein uL6 (190 aa).

Belongs to the universal ribosomal protein uL6 family.

In Spodoptera frugiperda (Fall armyworm), this protein is Large ribosomal subunit protein uL6 (RpL9).